The sequence spans 341 residues: L-threonine 3-dehydrogenase (341 aa).

Cys38 is a binding site for Zn(2+). Catalysis depends on charge relay system residues Thr40 and His43. His63, Glu64, Cys93, Cys96, Cys99, and Cys107 together coordinate Zn(2+). NAD(+)-binding positions include Ile175, Asp195, Arg200, 262–264 (LGI), and 286–287 (IY).

This sequence belongs to the zinc-containing alcohol dehydrogenase family. In terms of assembly, homotetramer. It depends on Zn(2+) as a cofactor.

The protein resides in the cytoplasm. The catalysed reaction is L-threonine + NAD(+) = (2S)-2-amino-3-oxobutanoate + NADH + H(+). Its pathway is amino-acid degradation; L-threonine degradation via oxydo-reductase pathway; glycine from L-threonine: step 1/2. In terms of biological role, catalyzes the NAD(+)-dependent oxidation of L-threonine to 2-amino-3-ketobutyrate. The sequence is that of L-threonine 3-dehydrogenase from Shewanella oneidensis (strain ATCC 700550 / JCM 31522 / CIP 106686 / LMG 19005 / NCIMB 14063 / MR-1).